A 236-amino-acid polypeptide reads, in one-letter code: 1-(5-phosphoribosyl)-5-[(5-phosphoribosylamino)methylideneamino] imidazole-4-carboxamide isomerase (236 aa).

Catalysis depends on D8, which acts as the Proton acceptor. Catalysis depends on D128, which acts as the Proton donor.

The protein belongs to the HisA/HisF family.

The protein localises to the cytoplasm. The catalysed reaction is 1-(5-phospho-beta-D-ribosyl)-5-[(5-phospho-beta-D-ribosylamino)methylideneamino]imidazole-4-carboxamide = 5-[(5-phospho-1-deoxy-D-ribulos-1-ylimino)methylamino]-1-(5-phospho-beta-D-ribosyl)imidazole-4-carboxamide. It functions in the pathway amino-acid biosynthesis; L-histidine biosynthesis; L-histidine from 5-phospho-alpha-D-ribose 1-diphosphate: step 4/9. The polypeptide is 1-(5-phosphoribosyl)-5-[(5-phosphoribosylamino)methylideneamino] imidazole-4-carboxamide isomerase (Nitrosopumilus maritimus (strain SCM1)).